The primary structure comprises 847 residues: Vacuolar membrane protease (847 aa).

Residues 1-17 (MQFGKSLLKHVYTRTFK) are Cytoplasmic-facing. A helical membrane pass occupies residues 18–38 (SSLTCSIFAFTLLMIFFVLDW). Residues 39-348 (KRMNVYPRLD…GSYWQINLNL (310 aa)) lie on the Vacuolar side of the membrane. Positions 146 and 158 each coordinate Zn(2+). E190 acts as the Proton acceptor in catalysis. Residue E191 participates in Zn(2+) binding. N208 carries an N-linked (GlcNAc...) asparagine glycan. A Zn(2+)-binding site is contributed by E216. N274 carries N-linked (GlcNAc...) asparagine glycosylation. H291 serves as a coordination point for Zn(2+). The chain crosses the membrane as a helical span at residues 349-369 (HLFLNVVFLIACPAILFMCLF). The Cytoplasmic segment spans residues 370–381 (RFPSLYAQLKKP). The chain crosses the membrane as a helical span at residues 382-402 (CYLICFTLSSLFVLIFDYVVV). Residues 403–415 (QSLTKLNPYVIHS) lie on the Vacuolar side of the membrane. The chain crosses the membrane as a helical span at residues 416 to 436 (SPDAVLAFFFLTNLLGLVYSF). At 437-454 (RYVATHSRMSNEELSCIE) the chain is on the cytoplasmic side. The chain crosses the membrane as a helical span at residues 455–475 (IVLIWYVSMFWYISLLIATLT). Residues 476–482 (SIVRGLG) lie on the Vacuolar side of the membrane. Residues 483–503 (SLYFVNFGFFCSFFCCILTLI) traverse the membrane as a helical segment. The Cytoplasmic portion of the chain corresponds to 504–560 (RVRYFVDRMVTINRPANPEQMPLVQSTSGNAYGTSRYPQHRLKAVVSKSASVKLNDN). A helical membrane pass occupies residues 561 to 581 (LWSVLFFSCLVPLPLFTCYNL). At 582–605 (LSEVFIPAVHQSLIDGPYSNTCYK) the chain is on the vacuolar side. The chain crosses the membrane as a helical span at residues 606-626 (FAVILVFMAIINSSPFVFRAL). At 627–630 (SKKS) the chain is on the cytoplasmic side. Residues 631 to 651 (SAILLMLWVSLLFNILRAEPF) traverse the membrane as a helical segment. Residues 652–847 (NEKAPIKFRV…LLKMSKTHVM (196 aa)) are Vacuolar-facing. Residues N726, N734, N800, and N834 are each glycosylated (N-linked (GlcNAc...) asparagine).

The protein belongs to the peptidase M28 family. Requires Zn(2+) as cofactor.

The protein resides in the vacuole membrane. May be involved in vacuolar sorting and osmoregulation. The chain is Vacuolar membrane protease from Schizosaccharomyces japonicus (strain yFS275 / FY16936) (Fission yeast).